The following is an 871-amino-acid chain: Alanine--tRNA ligase (871 aa).

Zn(2+) is bound by residues histidine 590, histidine 594, cysteine 694, and histidine 698.

The protein belongs to the class-II aminoacyl-tRNA synthetase family. Zn(2+) is required as a cofactor.

Its subcellular location is the cytoplasm. It catalyses the reaction tRNA(Ala) + L-alanine + ATP = L-alanyl-tRNA(Ala) + AMP + diphosphate. Catalyzes the attachment of alanine to tRNA(Ala) in a two-step reaction: alanine is first activated by ATP to form Ala-AMP and then transferred to the acceptor end of tRNA(Ala). Also edits incorrectly charged Ser-tRNA(Ala) and Gly-tRNA(Ala) via its editing domain. The polypeptide is Alanine--tRNA ligase (Thermoplasma acidophilum (strain ATCC 25905 / DSM 1728 / JCM 9062 / NBRC 15155 / AMRC-C165)).